We begin with the raw amino-acid sequence, 160 residues long: Bcl-2-like gene 16 protein (160 aa).

A BH1 motif is present at residues 64–84 (LLTTEHTTNWGKVVAMLSFSA).

This sequence belongs to the Bcl-2 family.

The polypeptide is Bcl-2-like gene 16 protein (16) (Saimiri sciureus (Common squirrel monkey)).